The following is a 394-amino-acid chain: Phosphoglycerate kinase (394 aa).

Residues 21 to 23 (DFN), arginine 36, 59 to 62 (HLGR), arginine 118, and arginine 151 contribute to the substrate site. Serine 183 carries the phosphoserine modification. ATP contacts are provided by lysine 201 and glycine 292. Residue threonine 299 is modified to Phosphothreonine. ATP is bound by residues glutamate 323 and 350–353 (GGDS).

It belongs to the phosphoglycerate kinase family. Monomer.

The protein resides in the cytoplasm. The enzyme catalyses (2R)-3-phosphoglycerate + ATP = (2R)-3-phospho-glyceroyl phosphate + ADP. It participates in carbohydrate degradation; glycolysis; pyruvate from D-glyceraldehyde 3-phosphate: step 2/5. This chain is Phosphoglycerate kinase (pgk), found in Priestia megaterium (strain DSM 319 / IMG 1521) (Bacillus megaterium).